The sequence spans 183 residues: Dual-action ribosomal maturation protein DarP (183 aa).

It belongs to the DarP family.

It is found in the cytoplasm. Member of a network of 50S ribosomal subunit biogenesis factors which assembles along the 30S-50S interface, preventing incorrect 23S rRNA structures from forming. Promotes peptidyl transferase center (PTC) maturation. The chain is Dual-action ribosomal maturation protein DarP from Escherichia coli O81 (strain ED1a).